The primary structure comprises 481 residues: Glutamyl-tRNA(Gln) amidotransferase subunit A (481 aa).

Active-site charge relay system residues include K76 and S151. S175 functions as the Acyl-ester intermediate in the catalytic mechanism.

The protein belongs to the amidase family. GatA subfamily. As to quaternary structure, heterotrimer of A, B and C subunits.

The enzyme catalyses L-glutamyl-tRNA(Gln) + L-glutamine + ATP + H2O = L-glutaminyl-tRNA(Gln) + L-glutamate + ADP + phosphate + H(+). Allows the formation of correctly charged Gln-tRNA(Gln) through the transamidation of misacylated Glu-tRNA(Gln) in organisms which lack glutaminyl-tRNA synthetase. The reaction takes place in the presence of glutamine and ATP through an activated gamma-phospho-Glu-tRNA(Gln). In Chlorobaculum parvum (strain DSM 263 / NCIMB 8327) (Chlorobium vibrioforme subsp. thiosulfatophilum), this protein is Glutamyl-tRNA(Gln) amidotransferase subunit A.